A 323-amino-acid chain; its full sequence is tRNA N6-adenosine threonylcarbamoyltransferase (323 aa).

The Fe cation site is built by H105, H109, and Y126. Residues 126–130, D158, G171, E175, and N255 each bind substrate; that span reads YVSGG. A Fe cation-binding site is contributed by D283.

The protein belongs to the KAE1 / TsaD family. As to quaternary structure, monomer. Component of the KEOPS complex that consists of Kae1, Bud32, Cgi121 and Pcc1; the whole complex dimerizes. It depends on Fe(2+) as a cofactor.

The protein resides in the cytoplasm. The enzyme catalyses L-threonylcarbamoyladenylate + adenosine(37) in tRNA = N(6)-L-threonylcarbamoyladenosine(37) in tRNA + AMP + H(+). In terms of biological role, required for the formation of a threonylcarbamoyl group on adenosine at position 37 (t(6)A37) in tRNAs that read codons beginning with adenine. Is a component of the KEOPS complex that is probably involved in the transfer of the threonylcarbamoyl moiety of threonylcarbamoyl-AMP (TC-AMP) to the N6 group of A37. Kae1 likely plays a direct catalytic role in this reaction, but requires other protein(s) of the complex to fulfill this activity. In Archaeoglobus fulgidus (strain ATCC 49558 / DSM 4304 / JCM 9628 / NBRC 100126 / VC-16), this protein is tRNA N6-adenosine threonylcarbamoyltransferase.